We begin with the raw amino-acid sequence, 195 residues long: MILSDADILRRLEQGDLVVEPLDDPDIQIQPASVDLRLGHEFLEFQHANIPCIHPNSEDEVSDYVEETVIEEGGEFILHPGDFVLGTTHERVAIPDDLIAHVEGRSSLGRLAIVVHATAGLCDPGYEGQITLELSNLGTAPVALTPGMRISQLTFTELKTPADRPYGAERGSKYQGQSGPQASKIQGDREFGGDQ.

DCTP-binding positions include 105–110, Asp123, 131–133, Gln152, Tyr166, Lys173, and Gln177; these read RSSLGR and TLE. Catalysis depends on Glu133, which acts as the Proton donor/acceptor. Residues 159–195 form a disordered region; it reads KTPADRPYGAERGSKYQGQSGPQASKIQGDREFGGDQ. Residues 160–172 are compositionally biased toward basic and acidic residues; sequence TPADRPYGAERGS. Polar residues predominate over residues 174–184; sequence YQGQSGPQASK. Positions 186 to 195 are enriched in basic and acidic residues; sequence QGDREFGGDQ.

Belongs to the dCTP deaminase family. As to quaternary structure, homotrimer.

It carries out the reaction dCTP + H2O + H(+) = dUTP + NH4(+). Its pathway is pyrimidine metabolism; dUMP biosynthesis; dUMP from dCTP (dUTP route): step 1/2. Catalyzes the deamination of dCTP to dUTP. In Haloarcula marismortui (strain ATCC 43049 / DSM 3752 / JCM 8966 / VKM B-1809) (Halobacterium marismortui), this protein is dCTP deaminase.